Reading from the N-terminus, the 259-residue chain is Proteasome subunit alpha type-7 (259 aa).

It belongs to the peptidase T1A family. The 26S proteasome consists of a 20S proteasome core and two 19S regulatory subunits. The 20S proteasome core is composed of 28 subunits that are arranged in four stacked rings, resulting in a barrel-shaped structure. The two end rings are each formed by seven alpha subunits, and the two central rings are each formed by seven beta subunits. The catalytic chamber with the active sites is on the inside of the barrel.

The protein localises to the cytoplasm. Its subcellular location is the nucleus. In terms of biological role, the proteasome is a multicatalytic proteinase complex which is characterized by its ability to cleave peptides with Arg, Phe, Tyr, Leu, and Glu adjacent to the leaving group at neutral or slightly basic pH. The proteasome has an ATP-dependent proteolytic activity. This Solanum lycopersicum (Tomato) protein is Proteasome subunit alpha type-7 (PAD1).